The chain runs to 377 residues: MPQLAPEGQLATQQIGDIRTEAGALIPDVTIAYHRWGEYEENADGSTNVVLIEHALTGDSNAADWWCDLVGPGKAIDTDLYCVICTNVLGGCNGSTGPSSQHPDGGFWGSRFPATDIRDQVKAEKQFLDAIGITRVKAVLGGSMGGARTLEWAAMFPDVVDAAAVLAVSARASAWQIGIQSAQIMAIENDHHWHEGNYYESGCNPSKGLGAARRIAHLTYRGELEIDERFGTQPQKGENPLGPYRRPDQRFAVESYLDHQADKLVKRFDAGSYVTLTDALNRHDIGRGRGGLNKALESITIPVMVAGVDTDILYPYHQQEHLSRNLGNLLAMAKIVSPVGHDAFLTESRQMDRILRNFFSLISPDEDNPSTYIEFFI.

In terms of domain architecture, AB hydrolase-1 spans 48–347 (NVVLIEHALT…PVGHDAFLTE (300 aa)). The active-site Nucleophile is the Ser-143. Residue Arg-213 coordinates substrate. Active-site residues include Asp-311 and His-341. Residue Asp-342 coordinates substrate.

The protein belongs to the AB hydrolase superfamily. MetX family. In terms of assembly, homodimer.

Its subcellular location is the cytoplasm. The catalysed reaction is L-homoserine + acetyl-CoA = O-acetyl-L-homoserine + CoA. The protein operates within amino-acid biosynthesis; L-methionine biosynthesis via de novo pathway; O-acetyl-L-homoserine from L-homoserine: step 1/1. Functionally, transfers an acetyl group from acetyl-CoA to L-homoserine, forming acetyl-L-homoserine. The polypeptide is Homoserine O-acetyltransferase (Corynebacterium efficiens (strain DSM 44549 / YS-314 / AJ 12310 / JCM 11189 / NBRC 100395)).